We begin with the raw amino-acid sequence, 232 residues long: Phosphoribosylformylglycinamidine synthase subunit PurQ (232 aa).

The Glutamine amidotransferase type-1 domain maps to 3 to 232; it reads FAVIVFPGSN…SLVASALAVV (230 aa). The active-site Nucleophile is cysteine 86. Residues histidine 203 and glutamate 205 contribute to the active site.

Part of the FGAM synthase complex composed of 1 PurL, 1 PurQ and 2 PurS subunits.

It localises to the cytoplasm. The catalysed reaction is N(2)-formyl-N(1)-(5-phospho-beta-D-ribosyl)glycinamide + L-glutamine + ATP + H2O = 2-formamido-N(1)-(5-O-phospho-beta-D-ribosyl)acetamidine + L-glutamate + ADP + phosphate + H(+). The enzyme catalyses L-glutamine + H2O = L-glutamate + NH4(+). It participates in purine metabolism; IMP biosynthesis via de novo pathway; 5-amino-1-(5-phospho-D-ribosyl)imidazole from N(2)-formyl-N(1)-(5-phospho-D-ribosyl)glycinamide: step 1/2. Its function is as follows. Part of the phosphoribosylformylglycinamidine synthase complex involved in the purines biosynthetic pathway. Catalyzes the ATP-dependent conversion of formylglycinamide ribonucleotide (FGAR) and glutamine to yield formylglycinamidine ribonucleotide (FGAM) and glutamate. The FGAM synthase complex is composed of three subunits. PurQ produces an ammonia molecule by converting glutamine to glutamate. PurL transfers the ammonia molecule to FGAR to form FGAM in an ATP-dependent manner. PurS interacts with PurQ and PurL and is thought to assist in the transfer of the ammonia molecule from PurQ to PurL. The sequence is that of Phosphoribosylformylglycinamidine synthase subunit PurQ from Gloeobacter violaceus (strain ATCC 29082 / PCC 7421).